A 462-amino-acid chain; its full sequence is Glycerol-3-phosphate dehydrogenase [NAD(+)] GPDHC1, cytosolic (462 aa).

NAD(+)-binding positions include 48–53, Lys-196, and Ala-235; that span reads GAGAWG. Lys-196 contacts substrate. Lys-285 functions as the Proton acceptor in the catalytic mechanism. Positions 347 and 375 each coordinate NAD(+). 347–348 serves as a coordination point for substrate; that stretch reads RN.

The protein belongs to the NAD-dependent glycerol-3-phosphate dehydrogenase family. Expressed in roots, leaves, flowers and siliques.

The protein localises to the cytoplasm. Its subcellular location is the cytosol. The catalysed reaction is sn-glycerol 3-phosphate + NAD(+) = dihydroxyacetone phosphate + NADH + H(+). In terms of biological role, involved in cell redox homeostasis. Required for maintaining a steady state cellular NADH/NAD(+) ratio through a mitochondrial glycerol-3-phosphate redox shuttle. May function with the mitochondrial FAD-dependent glycerol-3-phosphate dehydrogenase SDP6 to shuttle reducing equivalents into the mitochondria for respiration. The protein is Glycerol-3-phosphate dehydrogenase [NAD(+)] GPDHC1, cytosolic (GPDHC1) of Arabidopsis thaliana (Mouse-ear cress).